An 860-amino-acid polypeptide reads, in one-letter code: Paladin (860 aa).

The segment at 1-24 is disordered; sequence MGTTASAAPQATLHERLHSDSMTD. Glycine 2 is lipidated: N-myristoyl glycine. The span at 13-24 shows a compositional bias: basic and acidic residues; the sequence is LHERLHSDSMTD.

It belongs to the paladin family.

Its subcellular location is the cytoplasm. It is found in the cytosol. The sequence is that of Paladin (pald1) from Danio rerio (Zebrafish).